A 158-amino-acid polypeptide reads, in one-letter code: Urease accessory protein UreE (158 aa).

The protein belongs to the UreE family.

The protein localises to the cytoplasm. Involved in urease metallocenter assembly. Binds nickel. Probably functions as a nickel donor during metallocenter assembly. The protein is Urease accessory protein UreE of Klebsiella pneumoniae (strain 342).